A 227-amino-acid chain; its full sequence is Ubiquitin domain-containing protein 1 (227 aa).

Basic and acidic residues predominate over residues 1-14; sequence MGGCVGRERAETRG. Residues 1 to 45 form a disordered region; the sequence is MGGCVGRERAETRGRGSRTQRKRGGRNEPLKKDKPKWKSDYPMTE. Residues 15–24 are compositionally biased toward basic residues; it reads RGSRTQRKRG. A compositionally biased stretch (basic and acidic residues) spans 25–39; that stretch reads GRNEPLKKDKPKWKS. The region spanning 150-225 is the Ubiquitin-like domain; it reads FQLKVRLSTG…IQVIVNQPAP (76 aa).

In terms of biological role, may be involved in the regulation of cellular senescence through a positive feedback loop with TP53. This chain is Ubiquitin domain-containing protein 1 (ubtd1), found in Danio rerio (Zebrafish).